The chain runs to 69 residues: Conotoxin AbVIE (69 aa).

The signal sequence occupies residues 1 to 17 (VLIIAVLFLTACQLTTA). The propeptide occupies 18 to 40 (ETSSRGKQKHRALRSTDKYSRMT). Intrachain disulfides connect Cys-43-Cys-57, Cys-50-Cys-61, and Cys-56-Cys-66.

This sequence belongs to the conotoxin O1 superfamily. In terms of tissue distribution, expressed by the venom duct.

It is found in the secreted. The chain is Conotoxin AbVIE from Conus abbreviatus (Abbreviated cone).